Reading from the N-terminus, the 362-residue chain is S-adenosylmethionine:tRNA ribosyltransferase-isomerase (362 aa).

This sequence belongs to the QueA family. Monomer.

It is found in the cytoplasm. The enzyme catalyses 7-aminomethyl-7-carbaguanosine(34) in tRNA + S-adenosyl-L-methionine = epoxyqueuosine(34) in tRNA + adenine + L-methionine + 2 H(+). It functions in the pathway tRNA modification; tRNA-queuosine biosynthesis. Its function is as follows. Transfers and isomerizes the ribose moiety from AdoMet to the 7-aminomethyl group of 7-deazaguanine (preQ1-tRNA) to give epoxyqueuosine (oQ-tRNA). This chain is S-adenosylmethionine:tRNA ribosyltransferase-isomerase, found in Deinococcus radiodurans (strain ATCC 13939 / DSM 20539 / JCM 16871 / CCUG 27074 / LMG 4051 / NBRC 15346 / NCIMB 9279 / VKM B-1422 / R1).